The sequence spans 285 residues: Acetyl-coenzyme A carboxylase carboxyl transferase subunit beta (285 aa).

The CoA carboxyltransferase N-terminal domain occupies 29-285; sequence IMTKCPKCKK…ILKIHQEVTK (257 aa). Residues Cys-33, Cys-36, Cys-52, and Cys-55 each coordinate Zn(2+). A C4-type zinc finger spans residues 33–55; sequence CPKCKKIMYTKELAENLNVCFNC.

The protein belongs to the AccD/PCCB family. As to quaternary structure, acetyl-CoA carboxylase is a heterohexamer composed of biotin carboxyl carrier protein (AccB), biotin carboxylase (AccC) and two subunits each of ACCase subunit alpha (AccA) and ACCase subunit beta (AccD). Zn(2+) serves as cofactor.

The protein resides in the cytoplasm. The enzyme catalyses N(6)-carboxybiotinyl-L-lysyl-[protein] + acetyl-CoA = N(6)-biotinyl-L-lysyl-[protein] + malonyl-CoA. It participates in lipid metabolism; malonyl-CoA biosynthesis; malonyl-CoA from acetyl-CoA: step 1/1. Functionally, component of the acetyl coenzyme A carboxylase (ACC) complex. Biotin carboxylase (BC) catalyzes the carboxylation of biotin on its carrier protein (BCCP) and then the CO(2) group is transferred by the transcarboxylase to acetyl-CoA to form malonyl-CoA. This chain is Acetyl-coenzyme A carboxylase carboxyl transferase subunit beta, found in Staphylococcus aureus (strain Mu3 / ATCC 700698).